Consider the following 218-residue polypeptide: uncharacterized protein (218 aa).

Helical transmembrane passes span 19-39, 92-112, 124-144, 161-181, and 196-216; these read VFGF…FTII, FDYA…VSAV, YGLI…MILA, LLFE…IAPF, and YILM…EILL.

The protein localises to the cell membrane. This is an uncharacterized protein from Methanocaldococcus jannaschii (strain ATCC 43067 / DSM 2661 / JAL-1 / JCM 10045 / NBRC 100440) (Methanococcus jannaschii).